The following is a 341-amino-acid chain: GTPase Obg (341 aa).

The region spanning 1-159 is the Obg domain; the sequence is MKFVDEALIK…RNLRLELRVL (159 aa). Positions 128 to 150 are disordered; the sequence is TRYKSSVNRSPRQTTPGSPGESR. Polar residues predominate over residues 129 to 144; it reads RYKSSVNRSPRQTTPG. In terms of domain architecture, OBG-type G spans 160–334; sequence ADVGLLGLPN…LCYALMQLID (175 aa). Residues 166-173, 191-195, 213-216, 283-286, and 315-317 contribute to the GTP site; these read GLPNAGKS, FTTLH, DIPG, NKID, and SAI. Positions 173 and 193 each coordinate Mg(2+).

Belongs to the TRAFAC class OBG-HflX-like GTPase superfamily. OBG GTPase family. As to quaternary structure, monomer. Requires Mg(2+) as cofactor.

The protein localises to the cytoplasm. Functionally, an essential GTPase which binds GTP, GDP and possibly (p)ppGpp with moderate affinity, with high nucleotide exchange rates and a fairly low GTP hydrolysis rate. Plays a role in control of the cell cycle, stress response, ribosome biogenesis and in those bacteria that undergo differentiation, in morphogenesis control. The sequence is that of GTPase Obg from Legionella pneumophila subsp. pneumophila (strain Philadelphia 1 / ATCC 33152 / DSM 7513).